Consider the following 80-residue polypeptide: Small, acid-soluble spore protein Tlp (80 aa).

Positions 34–73 (AKESMEFATDEEKQRIQEKNARRNESIESFRSEIQDESAA) are enriched in basic and acidic residues. The tract at residues 34–80 (AKESMEFATDEEKQRIQEKNARRNESIESFRSEIQDESAARENGYQS) is disordered.

It belongs to the Tlp family.

The protein localises to the spore core. The sequence is that of Small, acid-soluble spore protein Tlp from Bacillus velezensis (strain DSM 23117 / BGSC 10A6 / LMG 26770 / FZB42) (Bacillus amyloliquefaciens subsp. plantarum).